We begin with the raw amino-acid sequence, 351 residues long: Sulfate/thiosulfate import ATP-binding protein CysA (351 aa).

One can recognise an ABC transporter domain in the interval 5-235 (IVVADATKRY…PANAFVMSFL (231 aa)). 37 to 44 (GPSGSGKS) is a binding site for ATP.

It belongs to the ABC transporter superfamily. Sulfate/tungstate importer (TC 3.A.1.6) family. The complex is composed of two ATP-binding proteins (CysA), two transmembrane proteins (CysT and CysW) and a solute-binding protein (CysP).

It is found in the cell membrane. It carries out the reaction sulfate(out) + ATP + H2O = sulfate(in) + ADP + phosphate + H(+). The enzyme catalyses thiosulfate(out) + ATP + H2O = thiosulfate(in) + ADP + phosphate + H(+). Part of the ABC transporter complex CysAWTP involved in sulfate/thiosulfate import. Responsible for energy coupling to the transport system. This is Sulfate/thiosulfate import ATP-binding protein CysA from Mycobacterium bovis (strain ATCC BAA-935 / AF2122/97).